Consider the following 208-residue polypeptide: Small ribosomal subunit protein uS4 (208 aa).

An S4 RNA-binding domain is found at 98-178; it reads SRLDNVVYRM…RPKWLEYDAE (81 aa).

It belongs to the universal ribosomal protein uS4 family. As to quaternary structure, part of the 30S ribosomal subunit. Contacts protein S5. The interaction surface between S4 and S5 is involved in control of translational fidelity.

Its function is as follows. One of the primary rRNA binding proteins, it binds directly to 16S rRNA where it nucleates assembly of the body of the 30S subunit. In terms of biological role, with S5 and S12 plays an important role in translational accuracy. In Acetivibrio thermocellus (strain ATCC 27405 / DSM 1237 / JCM 9322 / NBRC 103400 / NCIMB 10682 / NRRL B-4536 / VPI 7372) (Clostridium thermocellum), this protein is Small ribosomal subunit protein uS4.